The primary structure comprises 515 residues: Kelch repeat protein M-T8 (515 aa).

In terms of domain architecture, BTB spans 16–82; that stretch reads CDVEIVAEGK…MYTESIELHK (67 aa). 5 Kelch repeats span residues 280–326, 328–374, 376–423, 424–471, and 473–512; these read VLYF…AIGG, IYII…CYKN, IWVL…VYKE, RLYC…VYND, and LYVF…YATY.

The protein belongs to the poxviruses Kelch family.

The polypeptide is Kelch repeat protein M-T8 (Oryctolagus cuniculus (Rabbit)).